The sequence spans 334 residues: Beta-ketoacyl-[acyl-carrier-protein] synthase III (334 aa).

Residues C114 and H260 contribute to the active site. The interval 261–265 (QANLR) is ACP-binding. Residue N290 is part of the active site.

It belongs to the thiolase-like superfamily. FabH family. Homodimer.

It is found in the cytoplasm. It catalyses the reaction malonyl-[ACP] + acetyl-CoA + H(+) = 3-oxobutanoyl-[ACP] + CO2 + CoA. Its pathway is lipid metabolism; fatty acid biosynthesis. Functionally, catalyzes the condensation reaction of fatty acid synthesis by the addition to an acyl acceptor of two carbons from malonyl-ACP. Catalyzes the first condensation reaction which initiates fatty acid synthesis and may therefore play a role in governing the total rate of fatty acid production. Possesses both acetoacetyl-ACP synthase and acetyl transacylase activities. Its substrate specificity determines the biosynthesis of branched-chain and/or straight-chain of fatty acids. This Clostridium tetani (strain Massachusetts / E88) protein is Beta-ketoacyl-[acyl-carrier-protein] synthase III.